Here is a 132-residue protein sequence, read N- to C-terminus: uncharacterized protein (132 aa).

This is an uncharacterized protein from Mycoplasma genitalium (strain ATCC 33530 / DSM 19775 / NCTC 10195 / G37) (Mycoplasmoides genitalium).